The primary structure comprises 101 residues: Anti-sigma factor RshA (101 aa).

Residues 9–15 form an inhibits SigH sigma factor activity region; sequence DAHADHD. Cysteine 23 lines the iron-sulfur cluster pocket. 2 inhibits SigH sigma factor activity regions span residues 28–34 and 38–44; these read AEVWTLL and CTPETRE. Iron-sulfur cluster-binding residues include histidine 49, cysteine 53, and cysteine 56. Threonine 94 is modified (phosphothreonine).

It belongs to the zinc-associated anti-sigma factor (ZAS) superfamily. In terms of assembly, interacts with cognate sigma factor SigH under reducing conditions. Binding inhibits the interaction of SigH with the RNA polymerase catalytic core. It depends on iron-sulfur cluster as a cofactor. Post-translationally, phosphorylated, probably by PknB. Phosphorylation decreases interaction with SigH, leading to increased SigH-mediated transcription.

In terms of biological role, an redox-regulated anti-sigma factor for extracytoplasmic function (ECF) sigma factor SigH. ECF sigma factors are held in an inactive form by a cognate anti-sigma factor. RshA and some peptides derived from it inhibit the sigma factor activity of SigH. Probably releases SigH during oxidative stress. The chain is Anti-sigma factor RshA (rshA) from Mycobacterium tuberculosis (strain CDC 1551 / Oshkosh).